An 840-amino-acid polypeptide reads, in one-letter code: Urease (840 aa).

The Urease domain maps to Gly402–Phe840. Residues His407, His409, and Lys490 each coordinate Ni(2+). At Lys490 the chain carries N6-carboxylysine. His492 provides a ligand contact to substrate. His519 and His545 together coordinate Ni(2+). His593 serves as the catalytic Proton donor. Residue Asp633 coordinates Ni(2+).

The protein in the C-terminal section; belongs to the metallo-dependent hydrolases superfamily. Urease alpha subunit family. Homohexamer. Other oligomeric forms may exist depending on pH and presence of salts. The cofactor is Ni cation. Carboxylation allows a single lysine to coordinate two nickel ions.

It carries out the reaction urea + 2 H2O + H(+) = hydrogencarbonate + 2 NH4(+). It functions in the pathway nitrogen metabolism; urea degradation; CO(2) and NH(3) from urea (urease route): step 1/1. Its activity is regulated as follows. P-hydroxymercuribenzoate irreversibly abolishes ureolytic activity, but does not inhibit the ability to activate platelets. Also inhibited by acetohydroxamic acid (AHA), a chelator of Ni2+ and Zn2+ ions. Urea hydrolase involved in nitrogen recycling from ureide, purine, and arginine catabolism. Is known to be highly toxic and lethal when given by intravenous route, producing convulsions and other signs of central nervous system intoxication associated with the high levels of ammonia formed in the blood of mice and rabbits. Is neurotoxic in mammals, when directly injected into hippocampus. It may induce seizures by acting at a neuronal network level, thereby disturbing electroencephalographic rhythms and causing metabolic alterations in key areas related to epileptogenesis and to neurogenic pulmonary edema. It increases calcium influx and neuronal firing rate in the hippocampus. Is able to insert itself into lipid bilayers, altering physicochemical properties of artificial membranes, and forming cation-selective ion channels. In vitro, has the ability to induce platelet aggregation, platelet granules secretion and release of ATP. In contrast to canatoxin, another urease from C.ensiformis, is not lethal to mice when intraperitoneally injected. The chain is Urease from Canavalia ensiformis (Jack bean).